The primary structure comprises 453 residues: tRNA modification GTPase MnmE (453 aa).

The (6S)-5-formyl-5,6,7,8-tetrahydrofolate site is built by Arg-22, Glu-79, and Lys-119. In terms of domain architecture, TrmE-type G spans 215–376 (GMKVVIAGRP…LKQHLKSLMG (162 aa)). Asn-225 serves as a coordination point for K(+). GTP is bound by residues 225–230 (NAGKSS), 244–250 (TEIAGTT), 269–272 (DTAG), and 334–337 (NKAD). A Mg(2+)-binding site is contributed by Ser-229. K(+) is bound by residues Thr-244, Ile-246, and Thr-249. Thr-250 serves as a coordination point for Mg(2+). Lys-453 lines the (6S)-5-formyl-5,6,7,8-tetrahydrofolate pocket.

It belongs to the TRAFAC class TrmE-Era-EngA-EngB-Septin-like GTPase superfamily. TrmE GTPase family. Homodimer. Heterotetramer of two MnmE and two MnmG subunits. Requires K(+) as cofactor.

It localises to the cytoplasm. In terms of biological role, exhibits a very high intrinsic GTPase hydrolysis rate. Involved in the addition of a carboxymethylaminomethyl (cmnm) group at the wobble position (U34) of certain tRNAs, forming tRNA-cmnm(5)s(2)U34. The chain is tRNA modification GTPase MnmE from Shewanella frigidimarina (strain NCIMB 400).